The sequence spans 155 residues: MAVPGCNKDSVRAGCKKCGYPGHLTFECRNFLRVDPKRDIVLDVSSTSSEDSDEENEELNKLQALQEKRINEEEEKKKEKSKEKIKLKKKRKRSYSSSSTEEDTSKQKKQKYQKKEKKKEKKSKSKKGKHHKKEKKKRKKEKHSSTPNSSEFSRK.

A CCHC-type zinc finger spans residues alanine 13 to asparagine 30. The disordered stretch occupies residues valine 44–lysine 155. Phosphoserine is present on serine 52. Over residues glutamine 66 to lysine 84 the composition is skewed to basic and acidic residues. A compositionally biased stretch (basic residues) spans isoleucine 85 to serine 94. Serine 96 and serine 97 each carry phosphoserine. Over residues glutamine 107 to lysine 142 the composition is skewed to basic residues. Phosphothreonine is present on threonine 146. A compositionally biased stretch (polar residues) spans threonine 146–lysine 155.

In terms of assembly, interacts with SREK1/SFRS12.

Functionally, possible splicing regulator involved in the control of cellular survival. The protein is Protein SREK1IP1 (SREK1IP1) of Homo sapiens (Human).